An 87-amino-acid polypeptide reads, in one-letter code: Large ribosomal subunit protein bL27 (87 aa).

Belongs to the bacterial ribosomal protein bL27 family.

The protein is Large ribosomal subunit protein bL27 of Dechloromonas aromatica (strain RCB).